The chain runs to 137 residues: Small ribosomal subunit protein uS12 (137 aa).

The span at 31–41 (MSRKQTNNTAP) shows a compositional bias: polar residues. The disordered stretch occupies residues 31 to 57 (MSRKQTNNTAPQKRGVATRVGTMTPKK). At D102 the chain carries 3-methylthioaspartic acid.

Belongs to the universal ribosomal protein uS12 family. As to quaternary structure, part of the 30S ribosomal subunit. Contacts proteins S8 and S17. May interact with IF1 in the 30S initiation complex.

With S4 and S5 plays an important role in translational accuracy. In terms of biological role, interacts with and stabilizes bases of the 16S rRNA that are involved in tRNA selection in the A site and with the mRNA backbone. Located at the interface of the 30S and 50S subunits, it traverses the body of the 30S subunit contacting proteins on the other side and probably holding the rRNA structure together. The combined cluster of proteins S8, S12 and S17 appears to hold together the shoulder and platform of the 30S subunit. This is Small ribosomal subunit protein uS12 from Oenococcus oeni (strain ATCC BAA-331 / PSU-1).